The primary structure comprises 308 residues: Low density lipoprotein receptor adapter protein 1 (308 aa).

Methionine 1 carries the post-translational modification N-acetylmethionine. 3 positions are modified to phosphoserine: serine 14, serine 186, and serine 202. In terms of domain architecture, PID spans 42-196 (LLEGMLFSLK…QEGGDVLGAR (155 aa)). The Clathrin box motif lies at 212–216 (LLDLE). Residues 249–276 (WELDDGLDEAFSRLAQSRTNPQVLDTGL) are AP-2 complex binding. The [DE]-X(1,2)-F-X-X-[FL]-X-X-X-R motif signature appears at 257-266 (EAFSRLAQSR).

In terms of assembly, interacts (via PID domain) with LDLR (via NPXY motif). Binds to soluble clathrin trimers. Interacts with AP2B1; the interaction mediates the association with the AP-2 complex. Interacts with VLDLR. Interacts with LRP2. As to expression, expressed at high levels in the kidney, liver, and placenta, with lower levels detectable in brain, heart, muscle, colon, spleen, intestine, lung, and leukocytes.

It is found in the cytoplasm. Its function is as follows. Adapter protein (clathrin-associated sorting protein (CLASP)) required for efficient endocytosis of the LDL receptor (LDLR) in polarized cells such as hepatocytes and lymphocytes, but not in non-polarized cells (fibroblasts). May be required for LDL binding and internalization but not for receptor clustering in coated pits. May facilitate the endocytosis of LDLR and LDLR-LDL complexes from coated pits by stabilizing the interaction between the receptor and the structural components of the pits. May also be involved in the internalization of other LDLR family members. Binds to phosphoinositides, which regulate clathrin bud assembly at the cell surface. Required for trafficking of LRP2 to the endocytic recycling compartment which is necessary for LRP2 proteolysis, releasing a tail fragment which translocates to the nucleus and mediates transcriptional repression. The chain is Low density lipoprotein receptor adapter protein 1 from Homo sapiens (Human).